Here is a 156-residue protein sequence, read N- to C-terminus: MTEQTVTLQTTVGDITLELYYNHAPKACKNFYELSKRGYYDNTIFHRLIKDFMIQGGDPLGNGRGGESIYGKKFEDEITKELKHTGAGILSMANSGVNSNGSQFFITFGPTPWLDGKHTIFGRVKSGMKVVQKMNAMQTNNDKPIDEIRIIKATAN.

In terms of domain architecture, PPIase cyclophilin-type spans threonine 2–alanine 155.

It belongs to the cyclophilin-type PPIase family. Interacts with snwA.

The protein localises to the cytoplasm. It localises to the nucleus. The catalysed reaction is [protein]-peptidylproline (omega=180) = [protein]-peptidylproline (omega=0). Functionally, catalyzes the cis-trans isomerization of proline imidic peptide bonds in oligopeptides. Plays a role in protein folding, transport and assembly. The sequence is that of Peptidyl-prolyl cis-trans isomerase cypE (cypE) from Dictyostelium discoideum (Social amoeba).